The following is an 878-amino-acid chain: DNA mismatch repair protein MutS (878 aa).

626–633 contacts ATP; that stretch reads GPNMAGKS.

The protein belongs to the DNA mismatch repair MutS family.

This protein is involved in the repair of mismatches in DNA. It is possible that it carries out the mismatch recognition step. This protein has a weak ATPase activity. This is DNA mismatch repair protein MutS from Paracoccus denitrificans (strain Pd 1222).